A 292-amino-acid chain; its full sequence is Acetylglutamate kinase (292 aa).

Substrate-binding positions include 60 to 61 (GG), Arg-82, and Asn-187.

The protein belongs to the acetylglutamate kinase family. ArgB subfamily.

The protein localises to the cytoplasm. It catalyses the reaction N-acetyl-L-glutamate + ATP = N-acetyl-L-glutamyl 5-phosphate + ADP. Its pathway is amino-acid biosynthesis; L-arginine biosynthesis; N(2)-acetyl-L-ornithine from L-glutamate: step 2/4. Catalyzes the ATP-dependent phosphorylation of N-acetyl-L-glutamate. This Methanobrevibacter smithii (strain ATCC 35061 / DSM 861 / OCM 144 / PS) protein is Acetylglutamate kinase.